The chain runs to 1685 residues: Collagen alpha-5(IV) chain (1685 aa).

Positions 1-26 (MKLRGVSLAAGLFLLALSLWGQPAEA) are cleaved as a signal peptide. A nonhelical region (NC2) region spans residues 27–41 (AACYGCSPGSKCDCS). The triple-helical region stretch occupies residues 42-1456 (GIKGEKGERG…QGPPGPPGTS (1415 aa)). A disordered region spans residues 49–1459 (ERGFPGLEGH…PGPPGTSSVA (1411 aa)). Over residues 52-61 (FPGLEGHPGL) the composition is skewed to low complexity. Residues 62-73 (PGFPGPEGPPGP) show a composition bias toward pro residues. An N-linked (GlcNAc...) asparagine glycan is attached at Asn-125. Residues 188-212 (TGIPGPIGPPGPPGLMGPPGPPGLP) are compositionally biased toward pro residues. Low complexity predominate over residues 214–225 (PKGNMGLNFQGP). Over residues 246–257 (EQKRPIDVEFQK) the composition is skewed to basic and acidic residues. Residues 266 to 281 (RGPPGPPGIRGPPGPP) show a composition bias toward pro residues. Basic and acidic residues-rich tracts occupy residues 284-305 (EKGE…KDGE) and 324-333 (PGRDGEKGQK). Residues 413–430 (PPGISIPGPPGLDGQPGA) are compositionally biased toward low complexity. 4 stretches are compositionally biased toward pro residues: residues 431 to 445 (PGLP…PHIP), 493 to 505 (PGQP…PGPP), 620 to 630 (MGPPGFGPPGP), and 709 to 727 (PGPP…PGAP). The segment covering 788–797 (RTGLDGLPGP) has biased composition (low complexity). Composition is skewed to pro residues over residues 848-859 (PGPPGLDVPGPP) and 868-880 (PGAP…PGSP). Composition is skewed to low complexity over residues 882 to 901 (LPGK…MGMM), 912 to 931 (IPGR…QGQP), 983 to 999 (YQGL…SGQP), 1010 to 1026 (NPGL…PGLK), and 1111 to 1120 (TPGAKGQPGL). Positions 1139-1148 (PGNPGLPGEP) are enriched in pro residues. Gly residues-rich tracts occupy residues 1149 to 1158 (GPVGGGGHPG) and 1202 to 1211 (GQKGDGGLPG). 2 stretches are compositionally biased toward pro residues: residues 1234–1243 (QGPPGPPGSP) and 1256–1274 (PQGP…PPGL). Residues 1295–1308 (LPGLKGDQGPPGLQ) are compositionally biased toward low complexity. Pro residues predominate over residues 1353 to 1362 (IGPPGPPGLP). A Collagen IV NC1 domain is found at 1461 to 1685 (GFLITRHSQT…SRCQVCMKRT (225 aa)). Cystine bridges form between Cys-1476–Cys-1567, Cys-1509–Cys-1564, Cys-1521–Cys-1527, Cys-1586–Cys-1681, Cys-1620–Cys-1678, and Cys-1632–Cys-1638. Met-1549 is covalently cross-linked (S-Lysyl-methionine sulfilimine (Met-Lys) (interchain with K-1667)). Lys-1667 is covalently cross-linked (S-Lysyl-methionine sulfilimine (Lys-Met) (interchain with M-1549)).

The protein belongs to the type IV collagen family. There are six type IV collagen isoforms, alpha 1(IV)-alpha 6(IV), each of which can form a triple helix structure with 2 other chains to generate type IV collagen network. Post-translationally, prolines at the third position of the tripeptide repeating unit (G-X-Y) are hydroxylated in some or all of the chains. Type IV collagens contain numerous cysteine residues which are involved in inter- and intramolecular disulfide bonding. 12 of these, located in the NC1 domain, are conserved in all known type IV collagens. In terms of processing, the trimeric structure of the NC1 domains is stabilized by covalent bonds between Lys and Met residues. As to expression, isoform 2 is found in kidney.

Its subcellular location is the secreted. The protein localises to the extracellular space. The protein resides in the extracellular matrix. It localises to the basement membrane. Its function is as follows. Type IV collagen is the major structural component of glomerular basement membranes (GBM), forming a 'chicken-wire' meshwork together with laminins, proteoglycans and entactin/nidogen. The polypeptide is Collagen alpha-5(IV) chain (COL4A5) (Homo sapiens (Human)).